The primary structure comprises 128 residues: Holin-like protein CidA (128 aa).

The next 4 membrane-spanning stretches (helical) occupy residues 4–24 (LLLT…INWV), 27–46 (ALHI…FTLL), 59–79 (GAAW…VGVI), and 88–108 (FGVS…VSTG).

Belongs to the CidA/LrgA family. CidA subfamily.

It localises to the cell membrane. Functionally, increases the activity of extracellular murein hydrolases possibly by mediating their export via hole formation. Inhibited by the antiholin-like proteins LrgAB. In an unstressed cell, the LrgAB products probably inhibit the function of the CidA protein. When a cell is stressed by the addition of antibiotics or by other factors in the environment, CidA possibly oligomerizes within the bacterial cell membrane, creating lesions that disrupt the proton motive force, which in turn results in loss of cell viability. These lesions are also hypothesized to regulate the subsequent cell lysis by either allowing the murein hydrolases access to the cell wall substrate and/or regulating their activity by a possible change in the cell wall pH that results from loss of membrane potential. This chain is Holin-like protein CidA, found in Bacillus velezensis (strain DSM 23117 / BGSC 10A6 / LMG 26770 / FZB42) (Bacillus amyloliquefaciens subsp. plantarum).